A 628-amino-acid chain; its full sequence is Beta-lactamase-like protein 1 (628 aa).

The first 28 residues, 1–28, serve as a signal peptide directing secretion; the sequence is MKNILSFSFSFSFLYILFLLLFLNNNLL. 4 N-linked (GlcNAc...) asparagine glycosylation sites follow: asparagine 45, asparagine 68, asparagine 198, and asparagine 241. The segment covering 245–281 has biased composition (low complexity); the sequence is NNNNNNNNNNNNNNNNNNNNNNNNNNNNNNNNNNNNN. Residues 245–285 are disordered; it reads NNNNNNNNNNNNNNNNNNNNNNNNNNNNNNNNNNNNNKIKT. N-linked (GlcNAc...) asparagine glycosylation is found at asparagine 313 and asparagine 335. The disordered stretch occupies residues 494-516; that stretch reads EKEEKEEEEENQQDESQQQQQQQ. The span at 496–506 shows a compositional bias: acidic residues; the sequence is EEKEEEEENQQ. Positions 507 to 516 are enriched in low complexity; the sequence is DESQQQQQQQ.

This sequence belongs to the beta-lactamase family.

The protein localises to the secreted. This is Beta-lactamase-like protein 1 from Dictyostelium discoideum (Social amoeba).